The following is a 248-amino-acid chain: MILFPAIDLKGGQCVRLKLGDMQQATVYNTDPAAQAKSFEEQGFEWLHVVDLDGAFAGHSANGDAVEAILKATKNPVQLGGGIRTLDHIEAWLARGLRRVILGTVAVRNPDLVIEACRKFPGHVAVGIDAKGGKVAVEGWAEASELGVIELAQKFEGAGVSAIIYTDIDRDGILAGINWASTLALAGAVSIPVIASGGLASLDDVRRMLEPDARKLEGAISGRALYDGRIDPRQALALIKASRAKETA.

The Proton acceptor role is filled by Asp8. Asp129 serves as the catalytic Proton donor.

The protein belongs to the HisA/HisF family.

It localises to the cytoplasm. It catalyses the reaction 1-(5-phospho-beta-D-ribosyl)-5-[(5-phospho-beta-D-ribosylamino)methylideneamino]imidazole-4-carboxamide = 5-[(5-phospho-1-deoxy-D-ribulos-1-ylimino)methylamino]-1-(5-phospho-beta-D-ribosyl)imidazole-4-carboxamide. Its pathway is amino-acid biosynthesis; L-histidine biosynthesis; L-histidine from 5-phospho-alpha-D-ribose 1-diphosphate: step 4/9. This Rhizobium etli (strain CIAT 652) protein is 1-(5-phosphoribosyl)-5-[(5-phosphoribosylamino)methylideneamino] imidazole-4-carboxamide isomerase.